The chain runs to 231 residues: 5'-methylthioadenosine/S-adenosylhomocysteine nucleosidase (231 aa).

E12 acts as the Proton acceptor in catalysis. Substrate contacts are provided by residues G78, M153, and 174 to 175; that span reads ME. Catalysis depends on D198, which acts as the Proton donor.

The protein belongs to the PNP/UDP phosphorylase family. MtnN subfamily.

It catalyses the reaction S-adenosyl-L-homocysteine + H2O = S-(5-deoxy-D-ribos-5-yl)-L-homocysteine + adenine. The enzyme catalyses S-methyl-5'-thioadenosine + H2O = 5-(methylsulfanyl)-D-ribose + adenine. It carries out the reaction 5'-deoxyadenosine + H2O = 5-deoxy-D-ribose + adenine. It participates in amino-acid biosynthesis; L-methionine biosynthesis via salvage pathway; S-methyl-5-thio-alpha-D-ribose 1-phosphate from S-methyl-5'-thioadenosine (hydrolase route): step 1/2. Catalyzes the irreversible cleavage of the glycosidic bond in both 5'-methylthioadenosine (MTA) and S-adenosylhomocysteine (SAH/AdoHcy) to adenine and the corresponding thioribose, 5'-methylthioribose and S-ribosylhomocysteine, respectively. Also cleaves 5'-deoxyadenosine, a toxic by-product of radical S-adenosylmethionine (SAM) enzymes, into 5-deoxyribose and adenine. In Bacillus anthracis (strain A0248), this protein is 5'-methylthioadenosine/S-adenosylhomocysteine nucleosidase.